The sequence spans 427 residues: Cholecystokinin receptor type A (427 aa).

Residues 1–41 (MDAVASLLGNASGIPPPCELGLDNETLFCLDQPPPSKEWQP) lie on the Extracellular side of the membrane. Residues Asn-10 and Asn-24 are each glycosylated (N-linked (GlcNAc...) asparagine). An intrachain disulfide couples Cys-18 to Cys-29. A helical transmembrane segment spans residues 42–67 (AVQILLYSLIFLLSVLGNTLVITVLI). The Cytoplasmic segment spans residues 68 to 77 (RNKRMRTVTN). A helical membrane pass occupies residues 78–104 (IFLLSLAISDLMLCLFCMPFNLIPNLL). Residues 105 to 115 (KDFIFGSALCK) are Extracellular-facing. Residues Cys-114 and Cys-196 are joined by a disulfide bond. Residues 116–137 (TTTYLMGTSVSVSTLNLVAISL) traverse the membrane as a helical segment. Over 138 to 157 (ERYGAICKPLQSRVWQTKSH) the chain is Cytoplasmic. The chain crosses the membrane as a helical span at residues 158 to 178 (ALKVIAATWCLSFAIMTPYPI). Topologically, residues 179–210 (YSNLVPFTKTNNQTANMCRFLLPSDVMQQAWH) are extracellular. N-linked (GlcNAc...) asparagine glycosylation is present at Asn-190. Residues 211 to 234 (TFLLLILFLIPGIVMMVAYGMISL) traverse the membrane as a helical segment. At 235 to 312 (ELYQGIKFDA…TLMAKKRVIR (78 aa)) the chain is on the cytoplasmic side. The helical transmembrane segment at 313 to 333 (MLMVIVVLFFLCWMPIFSANA) threads the bilayer. Residues 334 to 348 (WRAYDTVSAERRLSG) lie on the Extracellular side of the membrane. The chain crosses the membrane as a helical span at residues 349–372 (TPISFILLLSYTSSCVNPIIYCFM). Topologically, residues 373 to 427 (NRRFRLGFMATFPCCPNPGPPGPRAEAGEEEEGRTTRASLSRYSYSHMSASAPPS) are cytoplasmic. A lipid anchor (S-palmitoyl cysteine) is attached at Cys-386. The segment at 391–427 (GPPGPRAEAGEEEEGRTTRASLSRYSYSHMSASAPPS) is disordered. A compositionally biased stretch (polar residues) spans 411–421 (SLSRYSYSHMS).

This sequence belongs to the G-protein coupled receptor 1 family.

Its subcellular location is the cell membrane. Receptor for cholecystokinin. Mediates pancreatic growth and enzyme secretion, smooth muscle contraction of the gall bladder and stomach. Has a 1000-fold higher affinity for CCK rather than for gastrin. It modulates feeding and dopamine-induced behavior in the central and peripheral nervous system. This receptor mediates its action by association with G proteins that activate a phosphatidylinositol-calcium second messenger system. In Oryctolagus cuniculus (Rabbit), this protein is Cholecystokinin receptor type A (CCKAR).